We begin with the raw amino-acid sequence, 860 residues long: MTAIEPQNLEKHTPMMRQYLTLKAQHPDMLLFYRMGDFYELFYEDAKLASELLGISLTARGKSGGDPIPMAGLPYHAVEGYLAKLVQLRVSVAICEQIGDPATSKGPVERKVVRIVTPGTLTDEALLQERQDNLLAALYQGKSGYGYATLDIASGRFVITELANTEALEAELQRTNPAELLYSEDFSQMSLIAGMNGTRRRPEWEFDFDTCQRLLLNQFGTKDLNGFGIEGARLSLQAAGCLMQYVKDTQRTALPHINSIVRFNQTDSIVLDAATRRNLELTVNLQGGHTNTLASVLDSTVTAMGSRMLQRWLHQPLRDHQVIKARQSSIAELIATENYQLLAEDLKALGDVERITARIALRNARPRDFARLRQALGLLPQLQQTLKASSEPHLQYLSQVIGEFPEELALLSRAVVDNPPMLIRDGGVIRDGYDAELDEWRVLSAGATDYLTQLEAREKEQTGISTLKVGYNRVHGYYIEVSRRESDLVPLSYQRRQTLKNTERYIIAELKEHEEKVLSSQGKALALEKQLWEELFDLILPKLHELQEFATAAAELDVLCNFAECAETLNYACPELSDASGIHVEAGRHPVVEQVSQSPFIANPVTLNSQRKMLIVTGPNMGGKSTYMRQIALITLMAHIGCYVPAEHAVIGPVDRIFTRIGASDDLASGRSTFMVEMTETANILHNATPNSLVLMDEIGRGTSTYDGLSLAWSAAEYLANNLNAMTLFATHYFELTQLPEQIKNVENVHLDAVEHGDSIVFMHAVQEGPASRSYGLQVAALAGVPNSVICAAKQKLHHLESRDHALEQSKNGEMAVQQTISFPTQPTSPVIEALEKLNPDELTPRQALDYLYNLKKMAR.

618–625 (GPNMGGKS) lines the ATP pocket.

Belongs to the DNA mismatch repair MutS family.

Its function is as follows. This protein is involved in the repair of mismatches in DNA. It is possible that it carries out the mismatch recognition step. This protein has a weak ATPase activity. The polypeptide is DNA mismatch repair protein MutS (Shewanella piezotolerans (strain WP3 / JCM 13877)).